A 286-amino-acid chain; its full sequence is NADPH-dependent 7-cyano-7-deazaguanine reductase (286 aa).

Residue 92 to 94 (IES) participates in substrate binding. Residue 94-95 (SK) participates in NADPH binding. Catalysis depends on Cys-194, which acts as the Thioimide intermediate. Asp-201 serves as the catalytic Proton donor. 233-234 (HE) is a substrate binding site. 262–263 (RG) contributes to the NADPH binding site.

This sequence belongs to the GTP cyclohydrolase I family. QueF type 2 subfamily. In terms of assembly, homodimer.

It is found in the cytoplasm. The enzyme catalyses 7-aminomethyl-7-carbaguanine + 2 NADP(+) = 7-cyano-7-deazaguanine + 2 NADPH + 3 H(+). The protein operates within tRNA modification; tRNA-queuosine biosynthesis. Its function is as follows. Catalyzes the NADPH-dependent reduction of 7-cyano-7-deazaguanine (preQ0) to 7-aminomethyl-7-deazaguanine (preQ1). This is NADPH-dependent 7-cyano-7-deazaguanine reductase from Shewanella oneidensis (strain ATCC 700550 / JCM 31522 / CIP 106686 / LMG 19005 / NCIMB 14063 / MR-1).